The sequence spans 611 residues: Sensor histidine kinase WalK (611 aa).

The Cytoplasmic segment spans residues 1 to 13; the sequence is MNKVGFFRSIQFK. Residues 14 to 34 form a helical membrane-spanning segment; the sequence is ITLIYVLLIIIAMQIIGVYFV. Over 35–182 the chain is Extracellular; the sequence is NQVEKSLISS…VFNQMKTINT (148 aa). The chain crosses the membrane as a helical span at residues 183 to 203; it reads ILASGTGLALVLTALLGIFLA. The 53-residue stretch at 204–256 folds into the HAMP domain; that stretch reads RTITHPLSDMRKQAMELAKGNFSRKVKKYGHDEIGQLATTFNHLTRELEDAQA. At 204–611 the chain is on the cytoplasmic side; that stretch reads RTITHPLSDM…EEQEDDWDEA (408 aa). Residues 263–324 enclose the PAS domain; the sequence is RKLASVIAYM…QENYTFEDLV (62 aa). The region spanning 325–379 is the PAC domain; it reads EQQDSMLLEIERDDELTVLRVNFSVIQREHGKIDGLIAVIYDVTEQEKMDQERRE. Positions 383–602 constitute a Histidine kinase domain; the sequence is NVSHELRTPL…TITFTLPYKE (220 aa). Position 386 is a phosphohistidine; by autocatalysis (H386).

Homodimer. Interacts with YycH and YycI. In terms of processing, autophosphorylated.

The protein localises to the cell membrane. The enzyme catalyses ATP + protein L-histidine = ADP + protein N-phospho-L-histidine.. Member of the two-component regulatory system WalK/WalR involved in the regulation of the ftsAZ operon, the yocH and ykvT, cwlO, lytE, ydjM, yjeA, yoeB genes and the tagAB and tagDEF operons. Phosphorylates WalR. In Bacillus subtilis (strain 168), this protein is Sensor histidine kinase WalK.